The chain runs to 208 residues: Uracil phosphoribosyltransferase (208 aa).

5-phospho-alpha-D-ribose 1-diphosphate-binding positions include Arg78, Arg103, and Asp130–Ser138. Uracil contacts are provided by residues Ile193 and Gly198 to Ala200. Residue Asp199 participates in 5-phospho-alpha-D-ribose 1-diphosphate binding.

It belongs to the UPRTase family. Requires Mg(2+) as cofactor.

The catalysed reaction is UMP + diphosphate = 5-phospho-alpha-D-ribose 1-diphosphate + uracil. It functions in the pathway pyrimidine metabolism; UMP biosynthesis via salvage pathway; UMP from uracil: step 1/1. Allosterically activated by GTP. Its function is as follows. Catalyzes the conversion of uracil and 5-phospho-alpha-D-ribose 1-diphosphate (PRPP) to UMP and diphosphate. The sequence is that of Uracil phosphoribosyltransferase from Haemophilus ducreyi (strain 35000HP / ATCC 700724).